Reading from the N-terminus, the 304-residue chain is Quinolinate synthase (304 aa).

Iminosuccinate is bound by residues histidine 23 and serine 40. Residue cysteine 85 coordinates [4Fe-4S] cluster. Residues 111 to 113 and serine 128 each bind iminosuccinate; that span reads YIN. Cysteine 171 provides a ligand contact to [4Fe-4S] cluster. Residues 197–199 and threonine 214 contribute to the iminosuccinate site; that span reads HPE. Cysteine 259 serves as a coordination point for [4Fe-4S] cluster.

Belongs to the quinolinate synthase family. Type 2 subfamily. [4Fe-4S] cluster is required as a cofactor.

Its subcellular location is the cytoplasm. It catalyses the reaction iminosuccinate + dihydroxyacetone phosphate = quinolinate + phosphate + 2 H2O + H(+). Its pathway is cofactor biosynthesis; NAD(+) biosynthesis; quinolinate from iminoaspartate: step 1/1. Catalyzes the condensation of iminoaspartate with dihydroxyacetone phosphate to form quinolinate. In Clostridioides difficile (strain 630) (Peptoclostridium difficile), this protein is Quinolinate synthase.